We begin with the raw amino-acid sequence, 1481 residues long: Cystic fibrosis transmembrane conductance regulator (1481 aa).

The Cytoplasmic portion of the chain corresponds to 1-77 (MQRSPLEKAS…KLINALRRCF (77 aa)). Residues 78–98 (FWRFMFYGIILYLGEVTKAVQ) traverse the membrane as a helical segment. The region spanning 81–365 (FMFYGIILYL…WAVQTWYDSL (285 aa)) is the ABC transmembrane type-1 1 domain. The Extracellular portion of the chain corresponds to 99-122 (PLLLGRIIASYDPDNKVERSIAIY). Residues 123-146 (LGIGLCLLFIVRTLLLHPAIFGLH) form a helical membrane-spanning segment. Residues 147 to 195 (HIGMQMRIAMFSLIYKKTLKLSSRVLDKISIGQLVSLLSNNLNKFDEGL) lie on the Cytoplasmic side of the membrane. Residues 196-216 (ALAHFVWIAPLQVTLLMGLLW) form a helical membrane-spanning segment. At 217-222 (ELLQAF) the chain is on the extracellular side. A helical transmembrane segment spans residues 223–243 (TFCGLAFLVVLAFLQAGLGKM). The Cytoplasmic segment spans residues 244–298 (MMKYRDQRAGKINERLVITSEIIENIQSVKAYCWEEAMEKIIENLRQTELKLTRK). Residues 299–319 (AAYVRYLNSSAFFFSGFFVVF) form a helical membrane-spanning segment. At 320–339 (LSVLPYALLKGIILRKIFTT) the chain is on the extracellular side. The helical transmembrane segment at 340–358 (ISFCIVLRMAVTRQFPWAV) threads the bilayer. Residues 359–858 (QTWYDSLGAI…YLRYITVHKS (500 aa)) are Cytoplasmic-facing. Residues W401, 457 to 464 (GSTGAGKT), and Q492 each bind ATP. The 223-residue stretch at 423–645 (NGDNNLFFSN…RPDFSSKLMG (223 aa)) folds into the ABC transporter 1 domain. C523 carries the S-palmitoyl cysteine lipid modification. A phosphoserine mark is found at S548 and S659. The tract at residues 653–831 (TAERRNSIIT…EEINEEDLRD (179 aa)) is disordered R region. S669 bears the Phosphoserine; by PKA mark. Phosphoserine is present on S685. Residue K687 forms a Glycyl lysine isopeptide (Lys-Gly) (interchain with G-Cter in ubiquitin) linkage. S699 and S711 each carry phosphoserine. T716 is modified (phosphothreonine). Phosphoserine is present on residues S736, S767, S790, S795, and S813. A helical membrane pass occupies residues 859–879 (LMFVLIWCLVVFLAEVAASLV). The region spanning 859-1155 (LMFVLIWCLV…AVNSSIDVDS (297 aa)) is the ABC transmembrane type-1 2 domain. At 880–918 (VLCLFPKILFQDKGNSTKSANNSYAVIITSTSSYYIFYI) the chain is on the extracellular side. N-linked (GlcNAc...) asparagine glycosylation is found at N894 and N900. Residues 919-939 (YVGVADTLLALGLFRGLPLVH) form a discontinuously helical membrane-spanning segment. The Cytoplasmic portion of the chain corresponds to 940 to 990 (TLITVSKTLHHKMLQSVLQAPMSTLNTLKTGGILNRFSKDIAVLDDLLPLT). Residues 991 to 1011 (IFDFVQLLLIVIGAVVVVSVL) form a helical membrane-spanning segment. The Extracellular portion of the chain corresponds to 1012-1013 (QP). Residues 1014–1034 (YIFLATVPVIAAFILLRAYFL) traverse the membrane as a helical segment. Residues 1035 to 1095 (HTSQQLKQLE…TANWFLYLST (61 aa)) lie on the Cytoplasmic side of the membrane. Residues 1096–1116 (LRWFQMRIEMIFVIFFIAVTF) traverse the membrane as a helical segment. The Extracellular portion of the chain corresponds to 1117-1130 (ISILTTGEGEGRVG). The chain crosses the membrane as a helical span at residues 1131–1151 (IILTLAMNIMGTLQWAVNSSI). Topologically, residues 1152–1481 (DVDSLMRSVS…TEEEVQETKL (330 aa)) are cytoplasmic. Residues 1211 to 1444 (MTVKDLTAKY…KSLFRQAISP (234 aa)) form the ABC transporter 2 domain. ATP is bound by residues Y1220 and 1245 to 1252 (GRTGSGKS). The interaction with GORASP2 stretch occupies residues 1387 to 1481 (RTLKQAFADC…TEEEVQETKL (95 aa)). Residue C1396 is the site of S-palmitoyl cysteine attachment. The disordered stretch occupies residues 1452–1481 (PQRNSSRQKSRSNIAALKEETEEEVQETKL). A compositionally biased stretch (low complexity) spans 1453 to 1464 (QRNSSRQKSRSN). Phosphoserine is present on S1457. Positions 1471–1481 (ETEEEVQETKL) are enriched in acidic residues. A PDZ-binding motif is present at residues 1479 to 1481 (TKL).

It belongs to the ABC transporter superfamily. ABCC family. CFTR transporter (TC 3.A.1.202) subfamily. In terms of assembly, monomer; does not require oligomerization for channel activity. May form oligomers in the membrane. Interacts with SLC26A3, SLC26A6 and NHERF1. Interacts with SHANK2. Interacts with MYO6. Interacts (via C-terminus) with GOPC (via PDZ domain); this promotes CFTR internalization and thereby decreases channel activity. Interacts with SLC4A7 through NHERF1. Found in a complex with MYO5B and RAB11A. Interacts with ANO1. Interacts with SLC26A8. Interacts with AHCYL1; the interaction increases CFTR activity. Interacts with CSE1L. The core-glycosylated form interacts with GORASP2 (via PDZ GRASP-type 1 domain) in respone to ER stress. Interacts with MARCHF2; the interaction leads to CFTR ubiqtuitination and degradation. Interacts with ADGRG2. N-glycosylated. In terms of processing, phosphorylated; cAMP treatment promotes phosphorylation and activates the channel. Dephosphorylation decreases the ATPase activity (in vitro). Phosphorylation at PKA sites activates the channel. Phosphorylation at PKC sites enhances the response to phosphorylation by PKA. Phosphorylated by AMPK; this inhibits channel activity. Post-translationally, ubiquitinated, leading to its degradation in the lysosome. Deubiquitination by USP10 in early endosomes enhances its endocytic recycling to the cell membrane. Ubiquitinated by RNF185 during ER stress. Ubiquitinated by MARCHF2.

Its subcellular location is the apical cell membrane. It is found in the early endosome membrane. The protein resides in the cell membrane. It localises to the recycling endosome membrane. The protein localises to the endoplasmic reticulum membrane. Its subcellular location is the nucleus. The catalysed reaction is ATP + H2O + closed Cl(-) channel = ADP + phosphate + open Cl(-) channel.. It catalyses the reaction chloride(in) = chloride(out). It carries out the reaction hydrogencarbonate(in) = hydrogencarbonate(out). The enzyme catalyses ATP + H2O = ADP + phosphate + H(+). Epithelial ion channel that plays an important role in the regulation of epithelial ion and water transport and fluid homeostasis. Mediates the transport of chloride ions across the cell membrane. Possesses an intrinsic ATPase activity and utilizes ATP to gate its channel; the passive flow of anions through the channel is gated by cycles of ATP binding and hydrolysis by the ATP-binding domains. The ion channel is also permeable to HCO(3)(-); selectivity depends on the extracellular chloride concentration. Exerts its function also by modulating the activity of other ion channels and transporters. Contributes to the regulation of the pH and the ion content of the epithelial fluid layer. Modulates the activity of the epithelial sodium channel (ENaC) complex, in part by regulating the cell surface expression of the ENaC complex. May regulate bicarbonate secretion and salvage in epithelial cells by regulating the transporter SLC4A7. Can inhibit the chloride channel activity of ANO1. Plays a role in the chloride and bicarbonate homeostasis during sperm epididymal maturation and capacitation. The chain is Cystic fibrosis transmembrane conductance regulator from Muntiacus muntjak (Barking deer).